A 255-amino-acid chain; its full sequence is Small ribosomal subunit protein uS2 (255 aa).

It belongs to the universal ribosomal protein uS2 family.

The sequence is that of Small ribosomal subunit protein uS2 from Streptococcus uberis (strain ATCC BAA-854 / 0140J).